Consider the following 391-residue polypeptide: Ammonium transporter Amt1 (391 aa).

Over 1-7 (MSDGNVA) the chain is Extracellular. A helical transmembrane segment spans residues 8-27 (WILASTALVMLMVPGVGFFY). At 28–38 (AGMVRRKNAVN) the chain is on the cytoplasmic side. Residues 39–57 (MIALSFISLIITVLLWIFY) traverse the membrane as a helical segment. At 58–89 (GYSVSFGNDISGIIGGLNYALLSGVKGEDLLF) the chain is on the extracellular side. The chain crosses the membrane as a helical span at residues 90-106 (MMYQMMFAAVTIAILTS). Residues 107 to 113 (AIAERAK) are Cytoplasmic-facing. The helical transmembrane segment at 114–137 (VSSFILLSALWLTFVYAPFAHWLW) threads the bilayer. Residues 138–152 (GGGWLAKLGALDFAG) are Extracellular-facing. Residues 153–170 (GMVVHISSGFAALAVAMT) traverse the membrane as a helical segment. Over 171-188 (IGKRAGFEEYSIEPHSIP) the chain is Cytoplasmic. A helical membrane pass occupies residues 189–208 (LTLIGAALLWFGWFGFNGGS). The Extracellular segment spans residues 209–217 (ALAANDVAI). The chain crosses the membrane as a helical span at residues 218–237 (NAVVVTNTSAAVAGFVWMVI). The Cytoplasmic portion of the chain corresponds to 238-245 (GWIKGKPG). A helical membrane pass occupies residues 246-263 (SLGIVSGAIAGLAAITPA). Residues 264–268 (AGFVD) are Extracellular-facing. A helical membrane pass occupies residues 269–287 (VKGAIVIGLVAGIVCYLAM). The Cytoplasmic portion of the chain corresponds to 288–300 (DFRIKKKIDESLD). The helical transmembrane segment at 301 to 319 (AWAIHGIGGLWGSVAVGIL) threads the bilayer. The Extracellular portion of the chain corresponds to 320–337 (ANPEVNGYAGLLFGNPQL). A helical transmembrane segment spans residues 338–363 (LVSQLIAVASTTAYAFLVTLILAKAV). Residues 364 to 391 (DAAVGLRVSSQEEYVGLDLSQHEEVAYT) are Cytoplasmic-facing.

This sequence belongs to the ammonia transporter channel (TC 1.A.11.2) family. As to quaternary structure, homotrimer.

It localises to the cell membrane. Involved in the uptake of ammonium/ammonia (NH(4)(+)/NH(3)). Transport is electrogenic. Transport the ammonium and methylammonium cation with high specificity. The polypeptide is Ammonium transporter Amt1 (Archaeoglobus fulgidus (strain ATCC 49558 / DSM 4304 / JCM 9628 / NBRC 100126 / VC-16)).